Consider the following 299-residue polypeptide: Pyridoxal 5'-phosphate synthase subunit PdxS (299 aa).

Residue aspartate 29 participates in D-ribose 5-phosphate binding. Residue lysine 86 is the Schiff-base intermediate with D-ribose 5-phosphate of the active site. D-ribose 5-phosphate is bound at residue glycine 158. Arginine 170 lines the D-glyceraldehyde 3-phosphate pocket. D-ribose 5-phosphate contacts are provided by residues glycine 219 and 240 to 241 (GS).

The protein belongs to the PdxS/SNZ family. In the presence of PdxT, forms a dodecamer of heterodimers.

The catalysed reaction is aldehydo-D-ribose 5-phosphate + D-glyceraldehyde 3-phosphate + L-glutamine = pyridoxal 5'-phosphate + L-glutamate + phosphate + 3 H2O + H(+). The protein operates within cofactor biosynthesis; pyridoxal 5'-phosphate biosynthesis. In terms of biological role, catalyzes the formation of pyridoxal 5'-phosphate from ribose 5-phosphate (RBP), glyceraldehyde 3-phosphate (G3P) and ammonia. The ammonia is provided by the PdxT subunit. Can also use ribulose 5-phosphate and dihydroxyacetone phosphate as substrates, resulting from enzyme-catalyzed isomerization of RBP and G3P, respectively. This Mycobacterium bovis (strain ATCC BAA-935 / AF2122/97) protein is Pyridoxal 5'-phosphate synthase subunit PdxS.